The chain runs to 354 residues: Probable L-ascorbate-6-phosphate lactonase UlaG (354 aa).

It belongs to the UlaG family. Requires a divalent metal cation as cofactor.

Its subcellular location is the cytoplasm. The catalysed reaction is L-ascorbate 6-phosphate + H2O = 3-dehydro-L-gulonate 6-phosphate. It functions in the pathway cofactor degradation; L-ascorbate degradation; D-xylulose 5-phosphate from L-ascorbate: step 1/4. Its function is as follows. Probably catalyzes the hydrolysis of L-ascorbate-6-P into 3-keto-L-gulonate-6-P. Is essential for L-ascorbate utilization under anaerobic conditions. The chain is Probable L-ascorbate-6-phosphate lactonase UlaG from Escherichia fergusonii (strain ATCC 35469 / DSM 13698 / CCUG 18766 / IAM 14443 / JCM 21226 / LMG 7866 / NBRC 102419 / NCTC 12128 / CDC 0568-73).